The primary structure comprises 445 residues: Glutamate-1-semialdehyde 2,1-aminomutase (445 aa).

Lysine 281 bears the N6-(pyridoxal phosphate)lysine mark.

This sequence belongs to the class-III pyridoxal-phosphate-dependent aminotransferase family. HemL subfamily. As to quaternary structure, homodimer. It depends on pyridoxal 5'-phosphate as a cofactor.

It localises to the cytoplasm. The enzyme catalyses (S)-4-amino-5-oxopentanoate = 5-aminolevulinate. Its pathway is porphyrin-containing compound metabolism; protoporphyrin-IX biosynthesis; 5-aminolevulinate from L-glutamyl-tRNA(Glu): step 2/2. The polypeptide is Glutamate-1-semialdehyde 2,1-aminomutase (Nocardioides sp. (strain ATCC BAA-499 / JS614)).